The chain runs to 194 residues: ATP-dependent Clp protease proteolytic subunit (194 aa).

The Nucleophile role is filled by serine 98. Histidine 123 is a catalytic residue.

It belongs to the peptidase S14 family. As to quaternary structure, fourteen ClpP subunits assemble into 2 heptameric rings which stack back to back to give a disk-like structure with a central cavity, resembling the structure of eukaryotic proteasomes.

Its subcellular location is the cytoplasm. It carries out the reaction Hydrolysis of proteins to small peptides in the presence of ATP and magnesium. alpha-casein is the usual test substrate. In the absence of ATP, only oligopeptides shorter than five residues are hydrolyzed (such as succinyl-Leu-Tyr-|-NHMec, and Leu-Tyr-Leu-|-Tyr-Trp, in which cleavage of the -Tyr-|-Leu- and -Tyr-|-Trp bonds also occurs).. Functionally, cleaves peptides in various proteins in a process that requires ATP hydrolysis. Has a chymotrypsin-like activity. Plays a major role in the degradation of misfolded proteins. This chain is ATP-dependent Clp protease proteolytic subunit, found in Aliarcobacter butzleri (strain RM4018) (Arcobacter butzleri).